A 148-amino-acid polypeptide reads, in one-letter code: uncharacterized protein (148 aa).

Low complexity predominate over residues 36–45; sequence PGAPSAGPMS. Residues 36–148 are disordered; it reads PGAPSAGPMS…SGTAFFPGTT (113 aa). The span at 46 to 55 shows a compositional bias: polar residues; the sequence is DSNSKGSTPR.

This is an uncharacterized protein from Bovine leukemia virus (isolate Japanese BLV-1) (BLV).